The sequence spans 562 residues: Abrin-c (562 aa).

The first 34 residues, 1-34, serve as a signal peptide directing secretion; sequence MDKTLKLLILCLAWTCSFSALRCAARTYPPVATN. Q35 is modified (pyrrolidone carboxylic acid). E198 is a catalytic residue. The N-linked (GlcNAc...) asparagine glycan is linked to N234. Intrachain disulfides connect C281–C303, C320–C339, and C363–C380. The Ricin B-type lectin 1 domain occupies 307-434; sequence YEPTVRIGGR…YLMRQGWRTG (128 aa). The 1-alpha repeat unit spans residues 317 to 359; sequence DGMCVDVYDDGYHNGNRIIAWKCKDRLEENQLWTLKSDKTIRS. The 1-beta repeat unit spans residues 360–400; that stretch reads NGKCLTTEGYAPGNYVMIYDCTSAVAEATYWEIWDNGTIIN. 2 N-linked (GlcNAc...) asparagine glycosylation sites follow: N395 and N435. The stretch at 403-435 is one 1-gamma repeat; that stretch reads SALVLSAESSSMGGTLTVQTNEYLMRQGWRTGN. One can recognise a Ricin B-type lectin 2 domain in the interval 437 to 561; sequence TSPFVTSISG…GKPNQIWLTL (125 aa). The 2-alpha repeat unit spans residues 448–483; it reads SDLCMQAQGSNVWLADCDNNKKEQQWALYTDGSIRS. 2 cysteine pairs are disulfide-bonded: C451-C464 and C490-C507. One copy of the 2-beta repeat lies at 487 to 526; it reads TNNCLTSKDHKQGSPIVLMACSNGWASQRWLFKNDGSIYN. One copy of the 2-gamma repeat lies at 529 to 562; it reads DDMVMDVKRSDPSLKEIILHPYHGKPNQIWLTLF.

In the N-terminal section; belongs to the ribosome-inactivating protein family. Type 2 RIP subfamily. Disulfide-linked dimer of A and B chains.

It catalyses the reaction Endohydrolysis of the N-glycosidic bond at one specific adenosine on the 28S rRNA.. Functionally, the A chain is responsible for inhibiting protein synthesis through the catalytic inactivation of 60S ribosomal subunits by removing adenine from position 4,324 of 28S rRNA. Abrin-a is more toxic than ricin. In terms of biological role, the B chain is a galactose-specific lectin that facilitates the binding of abrin to the cell membrane that precedes endocytosis. This chain is Abrin-c, found in Abrus precatorius (Indian licorice).